A 314-amino-acid polypeptide reads, in one-letter code: Acetyl-coenzyme A carboxylase carboxyl transferase subunit beta (314 aa).

The 271-residue stretch at 37-307 folds into the CoA carboxyltransferase N-terminal domain; sequence LWQKCPACDT…MSLPSIDSEA (271 aa). 4 residues coordinate Zn(2+): Cys-41, Cys-44, Cys-60, and Cys-63. Residues 41-63 form a C4-type zinc finger; sequence CPACDTLTYTKDLQQNWQVCPSC.

Belongs to the AccD/PCCB family. Acetyl-CoA carboxylase is a heterohexamer composed of biotin carboxyl carrier protein (AccB), biotin carboxylase (AccC) and two subunits each of ACCase subunit alpha (AccA) and ACCase subunit beta (AccD). The cofactor is Zn(2+).

Its subcellular location is the cytoplasm. The enzyme catalyses N(6)-carboxybiotinyl-L-lysyl-[protein] + acetyl-CoA = N(6)-biotinyl-L-lysyl-[protein] + malonyl-CoA. Its pathway is lipid metabolism; malonyl-CoA biosynthesis; malonyl-CoA from acetyl-CoA: step 1/1. Functionally, component of the acetyl coenzyme A carboxylase (ACC) complex. Biotin carboxylase (BC) catalyzes the carboxylation of biotin on its carrier protein (BCCP) and then the CO(2) group is transferred by the transcarboxylase to acetyl-CoA to form malonyl-CoA. In Synechococcus sp. (strain JA-2-3B'a(2-13)) (Cyanobacteria bacterium Yellowstone B-Prime), this protein is Acetyl-coenzyme A carboxylase carboxyl transferase subunit beta.